A 607-amino-acid polypeptide reads, in one-letter code: Leucine-rich repeat-containing protein 63 (607 aa).

7 LRR repeats span residues 357–378 (QLVY…VLYL), 380–401 (NLQV…IQQL), 403–424 (YLRK…LFCL), 426–447 (YLEE…IQKL), 449–470 (SLEK…ILKL), 471–497 (NLVK…NPPR), and 498–524 (LTHI…VVQK).

In Rattus norvegicus (Rat), this protein is Leucine-rich repeat-containing protein 63 (Lrrc63).